The primary structure comprises 123 residues: Large ribosomal subunit protein uL14 (123 aa).

It belongs to the universal ribosomal protein uL14 family. Part of the 50S ribosomal subunit. Forms a cluster with proteins L3 and L19. In the 70S ribosome, L14 and L19 interact and together make contacts with the 16S rRNA in bridges B5 and B8.

Its function is as follows. Binds to 23S rRNA. Forms part of two intersubunit bridges in the 70S ribosome. The protein is Large ribosomal subunit protein uL14 of Aliivibrio salmonicida (strain LFI1238) (Vibrio salmonicida (strain LFI1238)).